The following is a 63-amino-acid chain: Cecropin-B (63 aa).

The first 22 residues, 1–22 (MNFAKILSFVFALVLALSMTSA), serve as a signal peptide directing secretion. Positions 23-26 (APEP) are cleaved as a propeptide — removed by a dipeptidylpeptidase. Lys47 carries the post-translational modification 5-hydroxylysine; partial. Residue Ile61 is modified to Isoleucine amide.

It belongs to the cecropin family. In terms of processing, lepidopteran-B differs from lepidopteran-A by its hydroxylated residue. Highest expression in fat body and hemocytes. Is also expressed in Malpighian tubules and to a much lesser extent in midgut. Not present in silk gland.

The protein localises to the secreted. Its function is as follows. Cecropins have lytic and antibacterial activity against several Gram-positive and Gram-negative bacteria. In Bombyx mori (Silk moth), this protein is Cecropin-B (CECB1).